The chain runs to 739 residues: Transcription activator of gluconeogenesis MCYG_04674 (739 aa).

The segment covering 1-33 has biased composition (polar residues); sequence MSPHQTTGQESDNMAVNGENAQASSQYIQLNSE. The tract at residues 1 to 62 is disordered; sequence MSPHQTTGQE…PSRPKRKKAK (62 aa). A compositionally biased stretch (basic and acidic residues) spans 40-55; the sequence is AAEKKAAAAKAKDPSR. The zn(2)-C6 fungal-type DNA-binding region spans 65-93; it reads CYACQRGHLTCGDERPCQRCIKRGFQDAC. Disordered stretches follow at residues 174 to 223, 264 to 308, 380 to 420, 537 to 574, and 639 to 668; these read GPEN…QFNS, DTPP…GDSG, SRQN…HKNA, NHNV…STTA, and AQNN…GQRR. 2 stretches are compositionally biased toward polar residues: residues 267-284 and 397-411; these read PSDN…SSGT and PVVS…NLNI. Residues 547-557 are compositionally biased toward low complexity; that stretch reads GLLTGSTSRGS. Residues 562–574 show a composition bias toward polar residues; sequence PYSSDQFNSSTTA. Positions 653–664 are enriched in low complexity; the sequence is NSSSNGTTSTGR.

The protein belongs to the ERT1/acuK family.

It is found in the nucleus. Transcription factor which regulates nonfermentable carbon utilization. Activator of gluconeogenetic genes. The chain is Transcription activator of gluconeogenesis MCYG_04674 from Arthroderma otae (strain ATCC MYA-4605 / CBS 113480) (Microsporum canis).